The sequence spans 728 residues: Sodium-dependent transporter snf-5 (728 aa).

Residues 1–84 (MADSGSNEEA…PEEEEEKRDG (84 aa)) are Cytoplasmic-facing. The segment at 1 to 84 (MADSGSNEEA…PEEEEEKRDG (84 aa)) is disordered. Low complexity-rich tracts occupy residues 29-50 (QQVS…STQS) and 60-73 (KNTT…TLDT). Residues 85–105 (FGNSFEFVLTSLGLAVGLGNI) traverse the membrane as a helical segment. Residues Gly-97, Ala-99, Val-100, and Asn-104 each contribute to the Na(+) site. Residues 106 to 119 (WRFPTRAYNNGGSA) lie on the Extracellular side of the membrane. The helical transmembrane segment at 120–140 (FLIPYLTCAFLFGLPAVYFEF) threads the bilayer. The Cytoplasmic portion of the chain corresponds to 141–162 (LTGQYQGKSPPVIFRRVRPILE). A helical transmembrane segment spans residues 163 to 183 (GVGWMGVFVAALVAIYYIVIV). The Extracellular segment spans residues 184 to 285 (SWISIYMINI…PSSGMLDFGG (102 aa)). A disulfide bridge links Cys-204 with Cys-214. Residues Asn-210, Asn-225, Asn-232, Asn-237, and Asn-257 are each glycosylated (N-linked (GlcNAc...) asparagine). Residues 286–306 (FNWPVFAAMSVCWLLTGLGIL) form a helical membrane-spanning segment. Residues 307 to 314 (KGAKIMGK) lie on the Cytoplasmic side of the membrane. Residues 315 to 335 (ISYVSVLVPYVLVVVLFINGV) form a helical membrane-spanning segment. At 336–364 (FQDGSGVGLEMYFGTPNYTKLYEQDTWTE) the chain is on the extracellular side. Asn-352 carries an N-linked (GlcNAc...) asparagine glycan. Residues 365 to 386 (ALKQLCFSLSVGHGGLISLSSY) traverse the membrane as a helical segment. Ser-372 is a Na(+) binding site. Over 387-396 (SPKRNNIFRD) the chain is Cytoplasmic. Residues 397-417 (ALIVIIGDTTMSLVGGGAVFA) form a helical membrane-spanning segment. Residues 418–451 (TLGYLAKATGQDVKDVVKSGLSLAFVVYPEAMTR) lie on the Extracellular side of the membrane. A helical membrane pass occupies residues 452–472 (MPVPWLWCFIFFLMLFLLGAS). Leu-469 is a Na(+) binding site. The Cytoplasmic portion of the chain corresponds to 473–495 (TEIALVDVFCSCIYDQYPRFRNR). A helical membrane pass occupies residues 496-516 (KWIVVIAWCSVLYCIGLVFST). The Extracellular portion of the chain corresponds to 517–531 (RAGYYWFEMFDEYAA). The helical transmembrane segment at 532 to 552 (GFSSVCTVVCELLVMMYIYGF) threads the bilayer. The Cytoplasmic portion of the chain corresponds to 553-578 (RNVRDDITEVVGHARNKFTGAIGAHS). The helical transmembrane segment at 579-599 (WYFTANWMVISPSIALILVGL) threads the bilayer. The Extracellular portion of the chain corresponds to 600-616 (SFVREYPYMGRHDIYPA). A helical transmembrane segment spans residues 617–637 (VFDIFGWFLSFLPVIIVPIFM). Over 638-728 (LLNFIRCRNR…DTSSTYHQVY (91 aa)) the chain is Cytoplasmic. A compositionally biased stretch (acidic residues) spans 687–699 (PWDEENVDLTDSE). The interval 687–728 (PWDEENVDLTDSESESRNAASGDVPIDDVATIDTSSTYHQVY) is disordered. Residues 718–728 (IDTSSTYHQVY) show a composition bias toward polar residues.

Belongs to the sodium:neurotransmitter symporter (SNF) (TC 2.A.22) family. As to expression, expressed in the INT-9 cells and posterior cells of the alimentary canal of the intestine, gut epithelial cells, the pharynx of some worms, two cells of the rectal gland, and in DVA, DVB and DVC neurons and amphid sensory neurons ASI, ADF and ASK neurons.

Its subcellular location is the cell membrane. In terms of biological role, sodium-dependent amino acid transporter that mediates the uptake of the L-enantiomers of various amino acids, including L-proline and L-methionine, and also of acidic amino acids such as L-glutamic acid and L-aspartic acid. May additionally have a role in potassium-dependent amino acid absorption. In response to the availability of amino acid nutrients, may play a role in dauer formation. May play a role in promoting fertility. This is Sodium-dependent transporter snf-5 from Caenorhabditis elegans.